The chain runs to 329 residues: Pantothenate kinase (329 aa).

Positions 1–21 (MISPVPSIPRSAHRQRPEATP) are disordered. 107–114 (GSVAVGKS) is an ATP binding site.

Belongs to the prokaryotic pantothenate kinase family.

It is found in the cytoplasm. The catalysed reaction is (R)-pantothenate + ATP = (R)-4'-phosphopantothenate + ADP + H(+). It participates in cofactor biosynthesis; coenzyme A biosynthesis; CoA from (R)-pantothenate: step 1/5. The protein is Pantothenate kinase (coaA) of Streptomyces coelicolor (strain ATCC BAA-471 / A3(2) / M145).